The following is a 197-amino-acid chain: A-type ATP synthase subunit E 2 (197 aa).

The protein belongs to the V-ATPase E subunit family. As to quaternary structure, has multiple subunits with at least A(3), B(3), C, D, E, F, H, I and proteolipid K(x).

The protein localises to the cell membrane. Functionally, component of the A-type ATP synthase that produces ATP from ADP in the presence of a proton gradient across the membrane. The sequence is that of A-type ATP synthase subunit E 2 from Methanospirillum hungatei JF-1 (strain ATCC 27890 / DSM 864 / NBRC 100397 / JF-1).